Here is a 475-residue protein sequence, read N- to C-terminus: MQYSAQFNRAKVLVLGDVMLDRYWFGATNRISPEAPVPVVRVQENEERAGGAANVAMNIASLNVPVRLLGLTGKDEAARALMQLLEKQSIHCDFTQLDSHPTITKLRILSRHQQLLRLDFEEDFNNITSADLLRKLESAVQNYGALILSDYGKGTLNDVQKMIQIARKVNIPVLIDPKGTDFARYRSATLLTPNMSEFEAVVGKCHSEEEIAEKGLQLIKDLDLSALLVTRSEKGMTLLRPNNAPFHLPTEAKEVFDVTGAGDTVISVLATALADGRSYEEACYLANVAAGIVVGKLGTSTVSTVELENAIHGRTTAGFGIMEESQLKAAVELAKARGEKIVMTNGCFDILHPGHVSYLENARKLGDRLIVAVNTDNSVKRLKGETRPINDLATRMAVLAGLSSVDWLVAFDEDTPQRLIAEILPDLLVKGGDYKPEEIVGSKEVWLNGGEVKVLNFENGCSTTNVIKKIQQLKE.

The tract at residues 1–317 (MQYSAQFNRA…ENAIHGRTTA (317 aa)) is ribokinase. Position 194–197 (194–197 (NMSE)) interacts with ATP. Residue D263 is part of the active site. Residues 343 to 475 (MTNGCFDILH…VIKKIQQLKE (133 aa)) are cytidylyltransferase.

This sequence in the N-terminal section; belongs to the carbohydrate kinase PfkB family. The protein in the C-terminal section; belongs to the cytidylyltransferase family. Homodimer.

It carries out the reaction D-glycero-beta-D-manno-heptose 7-phosphate + ATP = D-glycero-beta-D-manno-heptose 1,7-bisphosphate + ADP + H(+). It catalyses the reaction D-glycero-beta-D-manno-heptose 1-phosphate + ATP + H(+) = ADP-D-glycero-beta-D-manno-heptose + diphosphate. The protein operates within nucleotide-sugar biosynthesis; ADP-L-glycero-beta-D-manno-heptose biosynthesis; ADP-L-glycero-beta-D-manno-heptose from D-glycero-beta-D-manno-heptose 7-phosphate: step 1/4. It participates in nucleotide-sugar biosynthesis; ADP-L-glycero-beta-D-manno-heptose biosynthesis; ADP-L-glycero-beta-D-manno-heptose from D-glycero-beta-D-manno-heptose 7-phosphate: step 3/4. Catalyzes the phosphorylation of D-glycero-D-manno-heptose 7-phosphate at the C-1 position to selectively form D-glycero-beta-D-manno-heptose-1,7-bisphosphate. Its function is as follows. Catalyzes the ADP transfer from ATP to D-glycero-beta-D-manno-heptose 1-phosphate, yielding ADP-D-glycero-beta-D-manno-heptose. This chain is Bifunctional protein HldE, found in Histophilus somni (strain 129Pt) (Haemophilus somnus).